The primary structure comprises 241 residues: Uracil-DNA glycosylase (241 aa).

Asp68 serves as the catalytic Proton acceptor.

This sequence belongs to the uracil-DNA glycosylase (UDG) superfamily. UNG family.

The protein localises to the cytoplasm. The enzyme catalyses Hydrolyzes single-stranded DNA or mismatched double-stranded DNA and polynucleotides, releasing free uracil.. Its function is as follows. Excises uracil residues from the DNA which can arise as a result of misincorporation of dUMP residues by DNA polymerase or due to deamination of cytosine. The protein is Uracil-DNA glycosylase of Sinorhizobium medicae (strain WSM419) (Ensifer medicae).